Here is a 154-residue protein sequence, read N- to C-terminus: uncharacterized protein (154 aa).

2 coiled-coil regions span residues 8–48 and 89–138; these read DEEV…AIEA and VQEL…RGLV.

This is an uncharacterized protein from Treponema pallidum (strain Nichols).